The sequence spans 229 residues: Cytidylate kinase (229 aa).

12–20 (GPSGVGKST) contributes to the ATP binding site.

It belongs to the cytidylate kinase family. Type 1 subfamily.

The protein localises to the cytoplasm. It carries out the reaction CMP + ATP = CDP + ADP. The catalysed reaction is dCMP + ATP = dCDP + ADP. The protein is Cytidylate kinase of Mesomycoplasma hyopneumoniae (strain 232) (Mycoplasma hyopneumoniae).